The primary structure comprises 475 residues: Ankyrin repeat, SAM and basic leucine zipper domain-containing protein 1 (475 aa).

The segment at 1–24 is disordered; that stretch reads MAAAVQRGLPVAGGGESSESEDDG. Ser-17, Ser-18, and Ser-20 each carry phosphoserine. 6 ANK repeats span residues 45 to 74, 78 to 107, 110 to 144, 148 to 177, 181 to 210, and 214 to 243; these read EKNE…SVES, YGWT…NASF, DKHT…DPNV, RLMT…EVNA, NGYT…NKML, and DGKT…PLEG. In terms of domain architecture, SAM spans 272–334; the sequence is SYAAFGDLEI…KILAALKELA (63 aa).

As to quaternary structure, interacts with DDX4, PIWIL1, RANBP9 and TDRD1.

The protein localises to the cytoplasm. Plays a central role during spermatogenesis by repressing transposable elements and preventing their mobilization, which is essential for the germline integrity. Acts via the piRNA metabolic process, which mediates the repression of transposable elements during meiosis by forming complexes composed of piRNAs and Piwi proteins and governs the methylation and subsequent repression of transposons. Its association with pi-bodies suggests a participation in the primary piRNAs metabolic process. Required prior to the pachytene stage to facilitate the production of multiple types of piRNAs, including those associated with repeats involved in the regulation of retrotransposons. May act by mediating protein-protein interactions during germ cell maturation. This chain is Ankyrin repeat, SAM and basic leucine zipper domain-containing protein 1 (ASZ1), found in Loxodonta africana (African elephant).